Consider the following 492-residue polypeptide: Probable ATP-citrate synthase subunit 2 (492 aa).

Serine 24 is modified (phosphoserine).

The protein in the N-terminal section; belongs to the succinate/malate CoA ligase beta subunit family. This sequence in the C-terminal section; belongs to the succinate/malate CoA ligase alpha subunit family. Composed of two subunits.

The protein resides in the cytoplasm. Its subcellular location is the nucleus. The catalysed reaction is oxaloacetate + acetyl-CoA + ADP + phosphate = citrate + ATP + CoA. Functionally, ATP citrate-lyase is the primary enzyme responsible for the synthesis of cytosolic acetyl-CoA. Has a central role in de novo lipid synthesis. The chain is Probable ATP-citrate synthase subunit 2 from Schizosaccharomyces pombe (strain 972 / ATCC 24843) (Fission yeast).